A 376-amino-acid chain; its full sequence is N-acetyldiaminopimelate deacetylase (376 aa).

The active site involves Asp-70. Glu-129 acts as the Proton acceptor in catalysis.

This sequence belongs to the peptidase M20A family. N-acetyldiaminopimelate deacetylase subfamily.

It carries out the reaction N-acetyl-(2S,6S)-2,6-diaminopimelate + H2O = (2S,6S)-2,6-diaminopimelate + acetate. Its pathway is amino-acid biosynthesis; L-lysine biosynthesis via DAP pathway; LL-2,6-diaminopimelate from (S)-tetrahydrodipicolinate (acetylase route): step 3/3. In terms of biological role, catalyzes the conversion of N-acetyl-diaminopimelate to diaminopimelate and acetate. The chain is N-acetyldiaminopimelate deacetylase from Geobacillus sp. (strain WCH70).